We begin with the raw amino-acid sequence, 229 residues long: Guanylate kinase (229 aa).

One can recognise an RPE1 insert domain in the interval 7-42 (RVLQKCAYREEFKGDMERSTAATSKLPLEVELSRNS). Residues 44–222 (GLIIILSSPS…TLKKIHAIIV (179 aa)) form the Guanylate kinase-like domain. 51-58 (SPSGTGKS) provides a ligand contact to ATP.

Belongs to the guanylate kinase family.

The protein localises to the cytoplasm. The catalysed reaction is GMP + ATP = GDP + ADP. Its function is as follows. Essential for recycling GMP and indirectly, cGMP. This Rickettsia conorii (strain ATCC VR-613 / Malish 7) protein is Guanylate kinase (gmk).